Here is a 323-residue protein sequence, read N- to C-terminus: Putative CRISPR-associated protein SSO1401 (323 aa).

Sometimes seen associated with the aCascade ribonucleoprotein complex, minimally composed of Csa2 and Cas5a, which binds crRNA. Other probable components of aCascade in strain P1 are Cas6 and Csa5, while SSO1399, Cas5b (SSO1400) and SSO1401 have sometimes been seen weakly associated. The Csa2-Cas5a-crRNA complex also binds target DNA homologous to crRNA, probably forming an R-loop. Purified aCascade forms a filament about 6 nm in width.

Functionally, CRISPR (clustered regularly interspaced short palindromic repeat) is an adaptive immune system that provides protection against mobile genetic elements (viruses, transposable elements and conjugative plasmids). CRISPR clusters contain spacers, sequences complementary to antecedent mobile elements, and target invading nucleic acids. CRISPR clusters are transcribed and processed into CRISPR RNA (crRNA). The protein is Putative CRISPR-associated protein SSO1401 of Saccharolobus solfataricus (strain ATCC 35092 / DSM 1617 / JCM 11322 / P2) (Sulfolobus solfataricus).